The chain runs to 435 residues: Diaminobutyrate--2-oxoglutarate transaminase (435 aa).

The residue at position 266 (Lys-266) is an N6-(pyridoxal phosphate)lysine.

The protein belongs to the class-III pyridoxal-phosphate-dependent aminotransferase family. Pyridoxal 5'-phosphate is required as a cofactor.

It catalyses the reaction L-2,4-diaminobutanoate + 2-oxoglutarate = L-aspartate 4-semialdehyde + L-glutamate. The protein operates within amine and polyamine biosynthesis; ectoine biosynthesis; L-ectoine from L-aspartate 4-semialdehyde: step 1/3. Its function is as follows. Catalyzes reversively the conversion of L-aspartate beta-semialdehyde (ASA) to L-2,4-diaminobutyrate (DABA) by transamination with L-glutamate. In Bordetella bronchiseptica (strain ATCC BAA-588 / NCTC 13252 / RB50) (Alcaligenes bronchisepticus), this protein is Diaminobutyrate--2-oxoglutarate transaminase (ectB).